Here is a 221-residue protein sequence, read N- to C-terminus: PKHD-type hydroxylase P9303_20491 (221 aa).

In terms of domain architecture, Fe2OG dioxygenase spans 80–174; that stretch reads HIHGVMFSRS…RLVCVGWIQS (95 aa). Residues H98, D100, and H155 each coordinate Fe cation. A 2-oxoglutarate-binding site is contributed by R165.

Fe(2+) is required as a cofactor. The cofactor is L-ascorbate.

This is PKHD-type hydroxylase P9303_20491 from Prochlorococcus marinus (strain MIT 9303).